We begin with the raw amino-acid sequence, 243 residues long: Ubiquinone/menaquinone biosynthesis C-methyltransferase UbiE (243 aa).

Residues Thr-69, Asp-90, and 116–117 (DA) contribute to the S-adenosyl-L-methionine site.

The protein belongs to the class I-like SAM-binding methyltransferase superfamily. MenG/UbiE family.

The enzyme catalyses a 2-demethylmenaquinol + S-adenosyl-L-methionine = a menaquinol + S-adenosyl-L-homocysteine + H(+). It carries out the reaction a 2-methoxy-6-(all-trans-polyprenyl)benzene-1,4-diol + S-adenosyl-L-methionine = a 5-methoxy-2-methyl-3-(all-trans-polyprenyl)benzene-1,4-diol + S-adenosyl-L-homocysteine + H(+). The protein operates within quinol/quinone metabolism; menaquinone biosynthesis; menaquinol from 1,4-dihydroxy-2-naphthoate: step 2/2. It functions in the pathway cofactor biosynthesis; ubiquinone biosynthesis. In terms of biological role, methyltransferase required for the conversion of demethylmenaquinol (DMKH2) to menaquinol (MKH2) and the conversion of 2-polyprenyl-6-methoxy-1,4-benzoquinol (DDMQH2) to 2-polyprenyl-3-methyl-6-methoxy-1,4-benzoquinol (DMQH2). The sequence is that of Ubiquinone/menaquinone biosynthesis C-methyltransferase UbiE from Cupriavidus necator (strain ATCC 17699 / DSM 428 / KCTC 22496 / NCIMB 10442 / H16 / Stanier 337) (Ralstonia eutropha).